A 376-amino-acid polypeptide reads, in one-letter code: 1-deoxy-D-xylulose 5-phosphate reductoisomerase (376 aa).

Residues Thr12, Gly13, Ser14, Ile15, Asn39, and Asn116 each contribute to the NADPH site. Lys117 serves as a coordination point for 1-deoxy-D-xylulose 5-phosphate. An NADPH-binding site is contributed by Glu118. Position 142 (Asp142) interacts with Mn(2+). 1-deoxy-D-xylulose 5-phosphate-binding residues include Ser143, Glu144, Ser164, and His187. Glu144 lines the Mn(2+) pocket. Gly193 is a binding site for NADPH. 1-deoxy-D-xylulose 5-phosphate is bound by residues Ser200, Asn205, Lys206, and Glu209. Glu209 provides a ligand contact to Mn(2+).

The protein belongs to the DXR family. Requires Mg(2+) as cofactor. The cofactor is Mn(2+).

The enzyme catalyses 2-C-methyl-D-erythritol 4-phosphate + NADP(+) = 1-deoxy-D-xylulose 5-phosphate + NADPH + H(+). It functions in the pathway isoprenoid biosynthesis; isopentenyl diphosphate biosynthesis via DXP pathway; isopentenyl diphosphate from 1-deoxy-D-xylulose 5-phosphate: step 1/6. In terms of biological role, catalyzes the NADPH-dependent rearrangement and reduction of 1-deoxy-D-xylulose-5-phosphate (DXP) to 2-C-methyl-D-erythritol 4-phosphate (MEP). This Thermotoga maritima (strain ATCC 43589 / DSM 3109 / JCM 10099 / NBRC 100826 / MSB8) protein is 1-deoxy-D-xylulose 5-phosphate reductoisomerase.